A 317-amino-acid polypeptide reads, in one-letter code: Long form salivary protein D7L2 (317 aa).

A signal peptide spans 1-20 (MYKLLVALHLILCTVSHVKT). Cystine bridges form between cysteine 39-cysteine 76, cysteine 72-cysteine 131, cysteine 181-cysteine 214, cysteine 195-cysteine 316, and cysteine 255-cysteine 266. Thromboxane A2-binding residues include tryptophan 58 and tyrosine 73. Residues glutamate 182, tyrosine 264, aspartate 281, aspartate 284, and methionine 308 each coordinate serotonin.

It belongs to the PBP/GOBP family. In terms of tissue distribution, female salivary gland.

The protein resides in the secreted. In terms of biological role, modulates blood feeding of female mosquitoes on vertebrate species by binding and sequestering different mediators involved in the host response, such as biogenic amines and eicosanoids. Binds serotonin with high affinity. Binds tryptamine, octopamine, dopamine and noradrenaline with low affinity. Binds leukotriene C4, leukotriene D4, leukotriene E4 and U-46619, a stable analog of thromboxane A2. Does not bind leukotriene B4, adrenaline, histamine and ADP. Inhibits platelet aggregation induced by low concentrations of collagen and arachidonic acid but not by ADP or adrenaline. The polypeptide is Long form salivary protein D7L2 (Anopheles darlingi (Mosquito)).